An 883-amino-acid polypeptide reads, in one-letter code: Phosphoenolpyruvate carboxylase (883 aa).

Catalysis depends on residues histidine 138 and lysine 546.

This sequence belongs to the PEPCase type 1 family. The cofactor is Mg(2+).

It catalyses the reaction oxaloacetate + phosphate = phosphoenolpyruvate + hydrogencarbonate. In terms of biological role, forms oxaloacetate, a four-carbon dicarboxylic acid source for the tricarboxylic acid cycle. In Salmonella choleraesuis (strain SC-B67), this protein is Phosphoenolpyruvate carboxylase.